Reading from the N-terminus, the 240-residue chain is 1-(5-phosphoribosyl)-5-[(5-phosphoribosylamino)methylideneamino] imidazole-4-carboxamide isomerase (240 aa).

Asp8 functions as the Proton acceptor in the catalytic mechanism. Catalysis depends on Asp129, which acts as the Proton donor.

The protein belongs to the HisA/HisF family.

The protein localises to the cytoplasm. It carries out the reaction 1-(5-phospho-beta-D-ribosyl)-5-[(5-phospho-beta-D-ribosylamino)methylideneamino]imidazole-4-carboxamide = 5-[(5-phospho-1-deoxy-D-ribulos-1-ylimino)methylamino]-1-(5-phospho-beta-D-ribosyl)imidazole-4-carboxamide. It functions in the pathway amino-acid biosynthesis; L-histidine biosynthesis; L-histidine from 5-phospho-alpha-D-ribose 1-diphosphate: step 4/9. The protein is 1-(5-phosphoribosyl)-5-[(5-phosphoribosylamino)methylideneamino] imidazole-4-carboxamide isomerase of Herpetosiphon aurantiacus (strain ATCC 23779 / DSM 785 / 114-95).